The chain runs to 500 residues: MDSSSFIQFDVPEYSSTVLSQLNELRLQGKLCDIIVHIQGQPFRAHKAVLAASSPYFRDHSALSTMSGLSISVIKNPNVFEQLLSFCYTGRMSLQLKDVVSFLTAASFLQMQCVIDKCTQILESIHSKISVGDVDSVTVGAEENPESRNGVKDSSFFANPVEISPPYCSQGRQPTASSDLRMETTPSKALRSRLQEEGHSDRGSSGSVSEYEIQIEGDHEQGDLLVRESQITEVKVKMEKSDRPSCSDSSSLGDDGYHTEMVDGEQVVAVNVGSYGSVLQHAYSYSQAASQPTNVSEAFGSLSNSSPSRSMLSCFRGGRARQKRALSVHLHSDLQGLVQGSDSEAMMNNPGYESSPRERSARGHWYPYNERLICIYCGKSFNQKGSLDRHMRLHMGITPFVCKFCGKKYTRKDQLEYHIRGHTDDKPFRCEICGKCFPFQGTLNQHLRKNHPGVAEVRSRIESPERTDVYVEQKLENDASASEMGLDSRMEIHTVSDAPD.

Residues 32–96 (CDIIVHIQGQ…CYTGRMSLQL (65 aa)) form the BTB domain. Serine 164 carries the post-translational modification Phosphoserine. The segment at 164 to 209 (SPPYCSQGRQPTASSDLRMETTPSKALRSRLQEEGHSDRGSSGSVS) is disordered. The span at 193 to 202 (RLQEEGHSDR) shows a compositional bias: basic and acidic residues. Residues lysine 235 and lysine 237 each participate in a glycyl lysine isopeptide (Lys-Gly) (interchain with G-Cter in SUMO2) cross-link. Residues 236–245 (VKMEKSDRPS) are compositionally biased toward basic and acidic residues. Disordered stretches follow at residues 236 to 256 (VKMEKSDRPSCSDSSSLGDDG) and 341 to 360 (SDSEAMMNNPGYESSPRERS). C2H2-type zinc fingers lie at residues 372–394 (LICIYCGKSFNQKGSLDRHMRLH) and 400–422 (FVCKFCGKKYTRKDQLEYHIRGH). Lysine 426 is covalently cross-linked (Glycyl lysine isopeptide (Lys-Gly) (interchain with G-Cter in SUMO2)). The C2H2-type 3 zinc finger occupies 428–451 (FRCEICGKCFPFQGTLNQHLRKNH). Serine 463 carries the post-translational modification Phosphoserine. Residue lysine 474 forms a Glycyl lysine isopeptide (Lys-Gly) (interchain with G-Cter in SUMO2) linkage. Positions 478–500 (DASASEMGLDSRMEIHTVSDAPD) are disordered.

As to expression, expressed in several tissues, including heart, brain, thymus, skeletal muscle, small intestine, testis, kidney, placenta, peripheral blood cells and adult and fetal liver.

The protein resides in the nucleus. Functionally, may be a transcriptional repressor. The chain is Zinc finger and BTB domain-containing protein 34 (ZBTB34) from Homo sapiens (Human).